The sequence spans 285 residues: Probable xyloglucan endotransglucosylase/hydrolase protein 12 (285 aa).

The first 25 residues, 1–25 (MAAFATKQSPLLLASLLILIGVATG), serve as a signal peptide directing secretion. The GH16 domain occupies 26–215 (SFYDSFDITW…WTNAPFSASY (190 aa)). Catalysis depends on glutamate 101, which acts as the Nucleophile. Glutamate 105 serves as the catalytic Proton donor. Residue glutamate 105 participates in xyloglucan binding. Asparagine 109 is a glycosylation site (N-linked (GlcNAc...) asparagine). Xyloglucan-binding positions include 118-120 (HTN), 128-130 (NRE), 194-195 (DW), and glycine 199. 2 cysteine pairs are disulfide-bonded: cysteine 224–cysteine 235 and cysteine 268–cysteine 282. Residue arginine 273 coordinates xyloglucan.

Belongs to the glycosyl hydrolase 16 family. XTH group 2 subfamily. Contains at least one intrachain disulfide bond essential for its enzymatic activity. As to expression, root specific.

The protein localises to the secreted. It is found in the cell wall. It localises to the extracellular space. Its subcellular location is the apoplast. The enzyme catalyses breaks a beta-(1-&gt;4) bond in the backbone of a xyloglucan and transfers the xyloglucanyl segment on to O-4 of the non-reducing terminal glucose residue of an acceptor, which can be a xyloglucan or an oligosaccharide of xyloglucan.. Catalyzes xyloglucan endohydrolysis (XEH) and/or endotransglycosylation (XET). Cleaves and religates xyloglucan polymers, an essential constituent of the primary cell wall, and thereby participates in cell wall construction of growing tissues. In Arabidopsis thaliana (Mouse-ear cress), this protein is Probable xyloglucan endotransglucosylase/hydrolase protein 12 (XTH12).